We begin with the raw amino-acid sequence, 160 residues long: Serine-protein kinase RsbW (160 aa).

It belongs to the anti-sigma-factor family.

The catalysed reaction is L-seryl-[protein] + ATP = O-phospho-L-seryl-[protein] + ADP + H(+). The enzyme catalyses L-threonyl-[protein] + ATP = O-phospho-L-threonyl-[protein] + ADP + H(+). In terms of biological role, negative regulator of sigma-B activity. Phosphorylates and inactivates its specific antagonist protein, RsbV. Upon phosphorylation of RsbV, RsbW is released and binds to sigma-B, thereby blocking its ability to form an RNA polymerase holoenzyme (E-sigma-B). The polypeptide is Serine-protein kinase RsbW (Bacillus cereus (strain AH187)).